Here is a 509-residue protein sequence, read N- to C-terminus: ATP synthase subunit beta (509 aa).

Residues methionine 1–alanine 28 are disordered. Glycine 187–threonine 194 is a binding site for ATP.

It belongs to the ATPase alpha/beta chains family. As to quaternary structure, F-type ATPases have 2 components, CF(1) - the catalytic core - and CF(0) - the membrane proton channel. CF(1) has five subunits: alpha(3), beta(3), gamma(1), delta(1), epsilon(1). CF(0) has three main subunits: a(1), b(2) and c(9-12). The alpha and beta chains form an alternating ring which encloses part of the gamma chain. CF(1) is attached to CF(0) by a central stalk formed by the gamma and epsilon chains, while a peripheral stalk is formed by the delta and b chains.

Its subcellular location is the cell inner membrane. It carries out the reaction ATP + H2O + 4 H(+)(in) = ADP + phosphate + 5 H(+)(out). Produces ATP from ADP in the presence of a proton gradient across the membrane. The catalytic sites are hosted primarily by the beta subunits. The polypeptide is ATP synthase subunit beta (Sinorhizobium medicae (strain WSM419) (Ensifer medicae)).